Consider the following 287-residue polypeptide: 4-hydroxybenzoate octaprenyltransferase (287 aa).

5 helical membrane passes run 35-55, 96-116, 211-231, 235-255, and 262-282; these read FAAG…GVVV, LFGV…PLVV, IIAA…MLAG, IYGL…KLIY, and CFTA…ALTL.

The protein belongs to the UbiA prenyltransferase family. The cofactor is Mg(2+).

It is found in the cell inner membrane. It catalyses the reaction all-trans-octaprenyl diphosphate + 4-hydroxybenzoate = 4-hydroxy-3-(all-trans-octaprenyl)benzoate + diphosphate. It functions in the pathway cofactor biosynthesis; ubiquinone biosynthesis. In terms of biological role, catalyzes the prenylation of para-hydroxybenzoate (PHB) with an all-trans polyprenyl group. Mediates the second step in the final reaction sequence of ubiquinone-8 (UQ-8) biosynthesis, which is the condensation of the polyisoprenoid side chain with PHB, generating the first membrane-bound Q intermediate 3-octaprenyl-4-hydroxybenzoate. The polypeptide is 4-hydroxybenzoate octaprenyltransferase (Shewanella halifaxensis (strain HAW-EB4)).